The chain runs to 123 residues: Small ribosomal subunit protein uS12c (123 aa).

It belongs to the universal ribosomal protein uS12 family. In terms of assembly, part of the 30S ribosomal subunit.

It localises to the plastid. It is found in the chloroplast. In terms of biological role, with S4 and S5 plays an important role in translational accuracy. Located at the interface of the 30S and 50S subunits. This Chaetosphaeridium globosum (Charophycean green alga) protein is Small ribosomal subunit protein uS12c (rps12).